Consider the following 365-residue polypeptide: Chorismate synthase (365 aa).

An NADP(+)-binding site is contributed by Arg-47. FMN is bound by residues 124–126, Gly-287, 302–306, and Arg-328; these read RAS and KPTAT.

This sequence belongs to the chorismate synthase family. Homotetramer. The cofactor is FMNH2.

It catalyses the reaction 5-O-(1-carboxyvinyl)-3-phosphoshikimate = chorismate + phosphate. It participates in metabolic intermediate biosynthesis; chorismate biosynthesis; chorismate from D-erythrose 4-phosphate and phosphoenolpyruvate: step 7/7. Its function is as follows. Catalyzes the anti-1,4-elimination of the C-3 phosphate and the C-6 proR hydrogen from 5-enolpyruvylshikimate-3-phosphate (EPSP) to yield chorismate, which is the branch point compound that serves as the starting substrate for the three terminal pathways of aromatic amino acid biosynthesis. This reaction introduces a second double bond into the aromatic ring system. The protein is Chorismate synthase of Prochlorococcus marinus (strain AS9601).